Consider the following 228-residue polypeptide: DNA mismatch repair protein MutH (228 aa).

It belongs to the MutH family.

The protein localises to the cytoplasm. In terms of biological role, sequence-specific endonuclease that cleaves unmethylated GATC sequences. It is involved in DNA mismatch repair. The sequence is that of DNA mismatch repair protein MutH from Yersinia enterocolitica serotype O:8 / biotype 1B (strain NCTC 13174 / 8081).